The chain runs to 449 residues: C4-dicarboxylate transport protein (449 aa).

Transmembrane regions (helical) follow at residues 18-38 (PFYL…ALLG), 61-81 (MIIS…VAHV), 93-113 (VYFL…AHVV), 159-179 (FVGD…IALA), 202-222 (LVQM…AFTI), 244-264 (SLLF…FSIL), 346-366 (LFLV…AGFI), and 369-389 (AATL…ILGV).

It belongs to the dicarboxylate/amino acid:cation symporter (DAACS) (TC 2.A.23) family.

The protein resides in the cell inner membrane. In terms of biological role, responsible for the transport of dicarboxylates such as succinate, fumarate, and malate from the periplasm across the membrane. This is C4-dicarboxylate transport protein from Xylella fastidiosa (strain M23).